A 159-amino-acid chain; its full sequence is Putative esterase DR_2406 (159 aa).

The protein belongs to the thioesterase PaaI family.

This chain is Putative esterase DR_2406, found in Deinococcus radiodurans (strain ATCC 13939 / DSM 20539 / JCM 16871 / CCUG 27074 / LMG 4051 / NBRC 15346 / NCIMB 9279 / VKM B-1422 / R1).